A 160-amino-acid polypeptide reads, in one-letter code: Sulfur-rich protein (160 aa).

2 consecutive transmembrane segments (helical) span residues 63-83 (ITMI…TFVL) and 92-112 (FLFL…SVFM).

The protein resides in the membrane. The protein is Sulfur-rich protein (srp) of Chlamydia abortus (strain DSM 27085 / S26/3) (Chlamydophila abortus).